The primary structure comprises 377 residues: Putative glutamate--cysteine ligase 2 (377 aa).

This sequence belongs to the glutamate--cysteine ligase type 2 family. YbdK subfamily.

The catalysed reaction is L-cysteine + L-glutamate + ATP = gamma-L-glutamyl-L-cysteine + ADP + phosphate + H(+). ATP-dependent carboxylate-amine ligase which exhibits weak glutamate--cysteine ligase activity. The sequence is that of Putative glutamate--cysteine ligase 2 from Pseudomonas aeruginosa (strain ATCC 15692 / DSM 22644 / CIP 104116 / JCM 14847 / LMG 12228 / 1C / PRS 101 / PAO1).